A 69-amino-acid chain; its full sequence is Large ribosomal subunit protein uL29 (69 aa).

This sequence belongs to the universal ribosomal protein uL29 family.

This chain is Large ribosomal subunit protein uL29, found in Polaromonas sp. (strain JS666 / ATCC BAA-500).